The primary structure comprises 512 residues: MAGGMSAECPEPGPGGLQGQSPGPGRQCPPPITPTSWSLPPWRAYVAAAVLCYINLLNYMNWFIIAGVLLDIQEVFQISDNHAGLLQTVFVSCLLLSAPVFGYLGDRHSRKATMSFGILLWSGAGLSSSFISPRYSWLFFLSRGIVGTGSASYSTIAPTVLGDLFVRDQRTRVLAVFYIFIPVGSGLGYVLGSAVTMLTGNWRWALRVMPCLEAVALILLILLVPDPPRGAAETQGEGAVGGFRSSWCEDVRYLGKNWSFVWSTLGVTAMAFVTGALGFWAPKFLLEARVVHGLQPPCFQEPCSNPDSLIFGALTIMTGVIGVILGAEAARRYKKVIPGAEPLICASSLLATAPCLYLALVLAPTTLLASYVFLGLGELLLSCNWAVVADILLSVVVPRCRGTAEALQITVGHILGDAGSPYLTGLISSVLRARRPDSYLQRFRSLQQSFLCCAFVIALGGGCFLLTALYLERDETRAWQPVTGTPDSNDVDSNDLERQGLLSGAGASTEEP.

The interval 1–30 is disordered; it reads MAGGMSAECPEPGPGGLQGQSPGPGRQCPP. The next 12 helical transmembrane spans lie at 50 to 70, 84 to 104, 112 to 132, 145 to 165, 173 to 193, 204 to 224, 260 to 280, 309 to 329, 343 to 365, 377 to 397, 411 to 431, and 450 to 470; these read VLCY…GVLL, GLLQ…FGYL, ATMS…SFIS, IVGT…GDLF, VLAV…VLGS, WALR…ILLV, FVWS…LGFW, LIFG…GAEA, LICA…LAPT, GELL…SVVV, VGHI…SSVL, and FLCC…TALY. The interval 481–512 is disordered; it reads PVTGTPDSNDVDSNDLERQGLLSGAGASTEEP.

It belongs to the major facilitator superfamily. Spinster (TC 2.A.1.49) family.

It is found in the membrane. Functionally, sphingolipid transporter. The chain is Protein spinster homolog 3 (SPNS3) from Homo sapiens (Human).